A 211-amino-acid chain; its full sequence is WUSCHEL-related homeobox 14 (211 aa).

A DNA-binding region (homeobox; WUS-type) is located at residues 91 to 155 (STRHRWTPTS…NRRARSKRKQ (65 aa)). The disordered stretch occupies residues 147-183 (RRARSKRKQPQTTTANGQADDVAVTTEERRSCGDSGG).

Belongs to the WUS homeobox family. In terms of tissue distribution, expressed in root vasculature, pericycle and stamen. Expressed in the procambium during stem maturation.

The protein localises to the nucleus. Functionally, acts redundantly with WOX4 downstream of the TDR/PXY receptor kinase to regulate procambial cell proliferation and differentiation in vascular tissue, independently of any role in vascular. Involved in the regulation of gibberellin (GA) biosynthesis pathway. Positively regulates the expression of the GA biosynthesis gene GA3OX1, and negatively regulates the expression of GA2OX1 during secondary growth, which increases bioactive GA content in the inflorescence stem. Promotes vascular cell differentiation in the inflorescence stem. Transcription factor which may be involved in developmental processes. The chain is WUSCHEL-related homeobox 14 (WOX14) from Arabidopsis thaliana (Mouse-ear cress).